The chain runs to 479 residues: Glycogen synthase (479 aa).

Lys-15 is a binding site for ADP-alpha-D-glucose.

It belongs to the glycosyltransferase 1 family. Bacterial/plant glycogen synthase subfamily.

The enzyme catalyses [(1-&gt;4)-alpha-D-glucosyl](n) + ADP-alpha-D-glucose = [(1-&gt;4)-alpha-D-glucosyl](n+1) + ADP + H(+). Its pathway is glycan biosynthesis; glycogen biosynthesis. Synthesizes alpha-1,4-glucan chains using ADP-glucose. This chain is Glycogen synthase, found in Nostoc punctiforme (strain ATCC 29133 / PCC 73102).